The chain runs to 289 residues: Iodotyrosine deiodinase 1 (289 aa).

The helical transmembrane segment at 1–21 (MFLLTPVLVAVVCILMVWIFK) threads the bilayer. FMN-binding positions include 100 to 104 (RRSVR) and 128 to 129 (SG). The 3,5-diiodo-L-tyrosine site is built by Ala130, Glu157, Tyr161, and Lys182. 4 residues coordinate 3-iodo-L-tyrosine: Ala130, Glu157, Tyr161, and Lys182. FMN contacts are provided by residues 237-239 (TTT) and Arg279.

It belongs to the nitroreductase family. Homodimer. The cofactor is FMN. Detected in thyroid (at protein level).

It localises to the cell membrane. It is found in the cytoplasmic vesicle membrane. It catalyses the reaction 2 iodide + L-tyrosine + 2 NADP(+) = 3,5-diiodo-L-tyrosine + 2 NADPH + H(+). It carries out the reaction iodide + L-tyrosine + NADP(+) = 3-iodo-L-tyrosine + NADPH. The enzyme catalyses 3-iodo-L-tyrosine + iodide + NADP(+) = 3,5-diiodo-L-tyrosine + NADPH + H(+). The catalysed reaction is L-tyrosine + chloride + NADP(+) = 3-chloro-L-tyrosine + NADPH. It catalyses the reaction bromide + L-tyrosine + NADP(+) = 3-bromo-L-tyrosine + NADPH. Its function is as follows. Catalyzes the dehalogenation of halotyrosines such as 3-bromo-L-tyrosine, 3-chloro-L-tyrosine, 3-iodo-L-tyrosine and 3,5-diiodo-L-tyrosine. During thyroid hormone biosynthesis, facilitates iodide salvage by catalysing the oxidative NADPH-dependent deiodination of the halogenated by-products of thyroid hormone production, monoiodotyrosine (L-MIT) and diiodotyrosine (L-DIT). The scavanged iodide can then reenter the hormone-producing pathways. Acts more efficiently on 3-iodo-L-tyrosine than 3,5-diiodo-L-tyrosine. The chain is Iodotyrosine deiodinase 1 (IYD) from Sus scrofa (Pig).